Reading from the N-terminus, the 146-residue chain is Large ribosomal subunit protein uL15 (146 aa).

Positions 1-18 are enriched in basic and acidic residues; that stretch reads MKLHELKPSEGSRKERNR. The segment at 1 to 50 is disordered; sequence MKLHELKPSEGSRKERNRVGRGTGSGNGKTSGRGHKGQKARSGGGVRLGF. Over residues 21–31 the composition is skewed to gly residues; sequence RGTGSGNGKTS.

This sequence belongs to the universal ribosomal protein uL15 family. In terms of assembly, part of the 50S ribosomal subunit.

Its function is as follows. Binds to the 23S rRNA. The chain is Large ribosomal subunit protein uL15 from Listeria innocua serovar 6a (strain ATCC BAA-680 / CLIP 11262).